We begin with the raw amino-acid sequence, 435 residues long: Serine/threonine-protein kinase ssn3 (435 aa).

The Protein kinase domain occupies 49 to 377; the sequence is YRIVGFISSG…AREALEHPYF (329 aa). ATP contacts are provided by residues 55-63 and lysine 79; that span reads ISSGTYGRV. Aspartate 181 serves as the catalytic Proton acceptor. Positions 398–407 are enriched in basic and acidic residues; it reads RRVTQDDNDI. A disordered region spans residues 398-435; the sequence is RRVTQDDNDIRSGSLPGTKRSGLPDDSLMGRASKRIKE.

Belongs to the protein kinase superfamily. CMGC Ser/Thr protein kinase family. CDC2/CDKX subfamily. Component of the srb8-11 complex, a regulatory module of the Mediator complex. It depends on Mg(2+) as a cofactor.

The protein localises to the nucleus. It carries out the reaction L-seryl-[protein] + ATP = O-phospho-L-seryl-[protein] + ADP + H(+). The enzyme catalyses L-threonyl-[protein] + ATP = O-phospho-L-threonyl-[protein] + ADP + H(+). The catalysed reaction is [DNA-directed RNA polymerase] + ATP = phospho-[DNA-directed RNA polymerase] + ADP + H(+). Functionally, component of the srb8-11 complex. The srb8-11 complex is a regulatory module of the Mediator complex which is itself involved in regulation of basal and activated RNA polymerase II-dependent transcription. The srb8-11 complex may be involved in the transcriptional repression of a subset of genes regulated by Mediator. It may inhibit the association of the Mediator complex with RNA polymerase II to form the holoenzyme complex. The srb8-11 complex phosphorylates the C-terminal domain (CTD) of the largest subunit of RNA polymerase II. In Aspergillus terreus (strain NIH 2624 / FGSC A1156), this protein is Serine/threonine-protein kinase ssn3 (ssn3).